The primary structure comprises 784 residues: Toll-like receptor 2 (784 aa).

The N-terminal stretch at M1–G20 is a signal peptide. Residues A21 to R587 are Extracellular-facing. A disulfide bridge connects residues C30 and C36. LRR repeat units lie at residues V54–N77, L78–N101, L102–A125, L126–N150, L151–F175, L176–N199, I200–S223, L224–S250, V251–G278, I279–N308, V309–K337, V338–S361, L362–F388, L389–N414, L415–K437, M438–Q457, T458–Q478, L479–V500, and L501–Q524. Residue N114 is glycosylated (N-linked (GlcNAc...) asparagine). The N-linked (GlcNAc...) asparagine glycan is linked to N199. N-linked (GlcNAc...) asparagine glycosylation occurs at N248. Cysteines 353 and 382 form a disulfide. Cysteines 432 and 454 form a disulfide. Residue N442 is glycosylated (N-linked (GlcNAc...) asparagine). One can recognise an LRRCT domain in the interval L525–R579. Residues A588–L608 form a helical membrane-spanning segment. Residues C609–S784 are Cytoplasmic-facing. Residues I639–I782 form the TIR domain. K754 participates in a covalent cross-link: Glycyl lysine isopeptide (Lys-Gly) (interchain with G-Cter in ubiquitin). An ATG16L1-binding motif motif is present at residues Y761–L778.

This sequence belongs to the Toll-like receptor family. In terms of assembly, interacts with LY96, TLR1 and TLR6 (via extracellular domain). TLR2 seems to exist in heterodimers with either TLR1 or TLR6 before stimulation by the ligand. The heterodimers form bigger oligomers in response to their corresponding ligands as well as further heterotypic associations with other receptors such as CD14 and/or CD36. Binds MYD88 (via TIR domain). Interacts with TICAM1. Interacts with CNPY3. Interacts with ATG16L1. Interacts with PPP1R11. Interacts with TICAM2. Interacts with TIRAP. Ubiquitinated at Lys-754 by PPP1R11, leading to its degradation. Deubiquitinated by USP2. In terms of processing, glycosylation of Asn-442 is critical for secretion of the N-terminal ectodomain of TLR2.

It is found in the membrane. It localises to the cytoplasmic vesicle. The protein localises to the phagosome membrane. The protein resides in the membrane raft. Cooperates with LY96 to mediate the innate immune response to bacterial lipoproteins and other microbial cell wall components. Cooperates with TLR1 or TLR6 to mediate the innate immune response to bacterial lipoproteins or lipopeptides. Acts via MYD88 and TRAF6, leading to NF-kappa-B activation, cytokine secretion and the inflammatory response. May also promote apoptosis in response to lipoproteins. Forms activation clusters composed of several receptors depending on the ligand, these clusters trigger signaling from the cell surface and subsequently are targeted to the Golgi in a lipid-raft dependent pathway. Forms the cluster TLR2:TLR6:CD14:CD36 in response to diacylated lipopeptides and TLR2:TLR1:CD14 in response to triacylated lipopeptides. This Bubalus bubalis (Domestic water buffalo) protein is Toll-like receptor 2 (TLR2).